A 131-amino-acid chain; its full sequence is MAFFNLHLLGYQNSFRSKKRDKTEETNQKDPVPTRLPPIFSEDGNYSVHQNSHTKYHEAVRKVSLKTFPNQVFRVPLTDAQNFSFWRSNAAGARPEETMPWIQNPRHCLIKSAMTRFMDHSILNDRNFSLY.

The interval 17–44 is disordered; the sequence is SKKRDKTEETNQKDPVPTRLPPIFSEDG.

As to quaternary structure, microtubule inner protein component of sperm flagellar doublet microtubules. In terms of tissue distribution, expressed in sperm.

The protein resides in the cytoplasm. It localises to the cytoskeleton. It is found in the flagellum axoneme. Its function is as follows. Microtubule inner protein (MIP) part of the dynein-decorated doublet microtubules (DMTs) in flagellum axoneme. May serve to reinforce and thus stabilize the microtubule structure in the sperm flagella. The sequence is that of Sperm microtubule inner protein 11 (SPMIP11) from Bos taurus (Bovine).